Here is a 461-residue protein sequence, read N- to C-terminus: uncharacterized protein (461 aa).

3 LRR repeats span residues 119–140 (NVKK…EKMS), 141–162 (LLEV…QHCK), and 163–184 (NLKE…EYLK). Residues 197-237 (NPCVGEGGQEYRRKVIRVLPNLTKLDDKPVTTTDHQEAIED) form the LRRCT domain.

This is an uncharacterized protein from Caenorhabditis elegans.